Reading from the N-terminus, the 542-residue chain is Chaperonin GroEL (542 aa).

Residues 29–32, 86–90, glycine 413, 476–478, and aspartate 492 each bind ATP; these read TLGP, DGTTT, and NAA.

Belongs to the chaperonin (HSP60) family. As to quaternary structure, forms a cylinder of 14 subunits composed of two heptameric rings stacked back-to-back. Interacts with the co-chaperonin GroES.

The protein resides in the cytoplasm. It carries out the reaction ATP + H2O + a folded polypeptide = ADP + phosphate + an unfolded polypeptide.. Its function is as follows. Together with its co-chaperonin GroES, plays an essential role in assisting protein folding. The GroEL-GroES system forms a nano-cage that allows encapsulation of the non-native substrate proteins and provides a physical environment optimized to promote and accelerate protein folding. This chain is Chaperonin GroEL, found in Lactococcus lactis subsp. lactis (strain IL1403) (Streptococcus lactis).